Here is a 119-residue protein sequence, read N- to C-terminus: BLOC-1-related complex subunit 8 (119 aa).

A Phosphoserine modification is found at serine 109.

The protein belongs to the BORCS8 family. As to quaternary structure, component of the BLOC-one-related complex (BORC) which is composed of BLOC1S1, BLOC1S2, BORCS5, BORCS6, BORCS7, BORCS8, KXD1 and SNAPIN.

The protein localises to the lysosome membrane. Its function is as follows. As part of the BLOC-one-related complex (BORC), it plays a role in the movement and localization of lysosomes at the cell periphery. Associated with the cytosolic face of lysosomes, BORC recruits ARL8B to the lysosomal membrane and couples lysosomes to microtubule plus-end-directed kinesin motors, driving lysosome movement toward the cell periphery. This is BLOC-1-related complex subunit 8 from Homo sapiens (Human).